The sequence spans 239 residues: DUP240 protein DFP3 (239 aa).

Over 1-54 (MQPHLDNNSNNDDVKLDTLGEQNVLSSAENITLPEDTFKSYMTYLLYEMAHYKP) the chain is Cytoplasmic. Residues 55–75 (MIFSFLALSVSILIVVIFHNV) form a helical membrane-spanning segment. Topologically, residues 76-79 (KACD) are extracellular. The chain crosses the membrane as a helical span at residues 80–104 (VVFGFSIFVTSILFLSTLIPFNVYI). The Cytoplasmic portion of the chain corresponds to 105–239 (SDEGFRIKLL…RKQYPDADIP (135 aa)).

This sequence belongs to the DUP/COS family. In terms of assembly, interacts according to large scale protein interaction studies with MEC3 and ULP1.

It localises to the membrane. The protein is DUP240 protein DFP3 of Saccharomyces cerevisiae (strain ATCC 204508 / S288c) (Baker's yeast).